The chain runs to 471 residues: Putative ABC transporter ATP-binding protein STK_11360 (471 aa).

ABC transporter domains are found at residues 4 to 241 and 255 to 470; these read LEIK…LEPL and VILE…VIKD. Residues 37 to 44 and 286 to 293 contribute to the ATP site; these read GKSGSGKS and GDNGSGKS.

Belongs to the ABC transporter superfamily.

Its subcellular location is the cell membrane. Probably part of an ABC transporter complex. Responsible for energy coupling to the transport system. This Sulfurisphaera tokodaii (strain DSM 16993 / JCM 10545 / NBRC 100140 / 7) (Sulfolobus tokodaii) protein is Putative ABC transporter ATP-binding protein STK_11360.